The following is a 78-amino-acid chain: uncharacterized protein (78 aa).

A helical transmembrane segment spans residues 21–43 (SPFLFGAPLVGGLLGGFLGSALF).

Its subcellular location is the membrane. This is an uncharacterized protein from Bacillus subtilis (strain 168).